The sequence spans 1826 residues: Protein TIC 214 (1826 aa).

The next 5 helical transmembrane spans lie at isoleucine 18–glycine 38, phenylalanine 67–leucine 87, leucine 127–leucine 147, valine 175–isoleucine 195, and isoleucine 221–isoleucine 241. A disordered region spans residues threonine 250–valine 308. Composition is skewed to acidic residues over residues glutamate 252–threonine 266 and glutamate 293–glutamate 304. A helical membrane pass occupies residues leucine 774 to valine 794. A disordered region spans residues threonine 1032–lysine 1057. The segment covering asparagine 1042–lysine 1057 has biased composition (basic residues). The helical transmembrane segment at phenylalanine 1081–isoleucine 1101 threads the bilayer.

It belongs to the TIC214 family. In terms of assembly, part of the Tic complex.

The protein localises to the plastid. Its subcellular location is the chloroplast inner membrane. Its function is as follows. Involved in protein precursor import into chloroplasts. May be part of an intermediate translocation complex acting as a protein-conducting channel at the inner envelope. In Daucus carota (Wild carrot), this protein is Protein TIC 214.